Here is a 363-residue protein sequence, read N- to C-terminus: Flagellar P-ring protein 2 (363 aa).

Positions 1 to 20 (MKLRTCCISLMLLLALPLQA) are cleaved as a signal peptide.

The protein belongs to the FlgI family. The basal body constitutes a major portion of the flagellar organelle and consists of four rings (L,P,S, and M) mounted on a central rod.

The protein localises to the periplasm. Its subcellular location is the bacterial flagellum basal body. Functionally, assembles around the rod to form the L-ring and probably protects the motor/basal body from shearing forces during rotation. This chain is Flagellar P-ring protein 2, found in Photobacterium profundum (strain SS9).